A 108-amino-acid polypeptide reads, in one-letter code: uncharacterized protein (108 aa).

Residues 7 to 27 (FIPMLLVANAAPYFFYPIFML) traverse the membrane as a helical segment.

To N.crassa NCU05373.1.

The protein resides in the membrane. This is an uncharacterized protein from Schizosaccharomyces pombe (strain 972 / ATCC 24843) (Fission yeast).